We begin with the raw amino-acid sequence, 630 residues long: ATP-dependent RNA helicase mrh4, mitochondrial (630 aa).

Residues 1–46 (MNRLGGLSLPLRPVCLFCRAQTSLALSPLQGGQAVRSIATGRLRRR) constitute a mitochondrion transit peptide. A disordered region spans residues 46-108 (RARMTLSKDV…GETEEKPAMN (63 aa)). Positions 167–174 (DAVPTPIQ) match the Q motif motif. Residues 195–407 (DDDEPQYEQY…RKLYPDIWRL (213 aa)) form the Helicase ATP-binding domain. ATP is bound at residue 208-215 (AETGSGKT). Positions 235–255 (EMEKKEEERKVREREENKKNQ) are enriched in basic and acidic residues. Residues 235 to 265 (EMEKKEEERKVREREENKKNQAFDLEPEIPP) form a disordered region. Positions 354 to 357 (DEAD) match the DEAD box motif. In terms of domain architecture, Helicase C-terminal spans 452–630 (GSDEAGSPWS…VREVWFGLDS (179 aa)).

Belongs to the DEAD box helicase family. MRH4 subfamily.

It localises to the mitochondrion. It carries out the reaction ATP + H2O = ADP + phosphate + H(+). Functionally, ATP-binding RNA helicase involved in mitochondrial RNA metabolism. Required for maintenance of mitochondrial DNA. This Emericella nidulans (strain FGSC A4 / ATCC 38163 / CBS 112.46 / NRRL 194 / M139) (Aspergillus nidulans) protein is ATP-dependent RNA helicase mrh4, mitochondrial (mrh4).